A 424-amino-acid chain; its full sequence is Serine--tRNA ligase 1 (424 aa).

Residue 232 to 234 (TAE) participates in L-serine binding. Residue 263 to 265 (RSE) coordinates ATP. Glutamate 286 lines the L-serine pocket. 350-353 (EISS) lines the ATP pocket. Serine 386 contacts L-serine.

This sequence belongs to the class-II aminoacyl-tRNA synthetase family. Type-1 seryl-tRNA synthetase subfamily. In terms of assembly, homodimer. The tRNA molecule binds across the dimer.

The protein resides in the cytoplasm. It catalyses the reaction tRNA(Ser) + L-serine + ATP = L-seryl-tRNA(Ser) + AMP + diphosphate + H(+). The catalysed reaction is tRNA(Sec) + L-serine + ATP = L-seryl-tRNA(Sec) + AMP + diphosphate + H(+). Its pathway is aminoacyl-tRNA biosynthesis; selenocysteinyl-tRNA(Sec) biosynthesis; L-seryl-tRNA(Sec) from L-serine and tRNA(Sec): step 1/1. Catalyzes the attachment of serine to tRNA(Ser). Is also able to aminoacylate tRNA(Sec) with serine, to form the misacylated tRNA L-seryl-tRNA(Sec), which will be further converted into selenocysteinyl-tRNA(Sec). This is Serine--tRNA ligase 1 from Clostridium acetobutylicum (strain ATCC 824 / DSM 792 / JCM 1419 / IAM 19013 / LMG 5710 / NBRC 13948 / NRRL B-527 / VKM B-1787 / 2291 / W).